We begin with the raw amino-acid sequence, 497 residues long: Glycerol kinase (497 aa).

ADP is bound at residue Thr-13. Thr-13, Thr-14, and Ser-15 together coordinate ATP. Thr-13 contributes to the sn-glycerol 3-phosphate binding site. ADP is bound at residue Arg-17. The sn-glycerol 3-phosphate site is built by Arg-83, Glu-84, and Tyr-135. Glycerol-binding residues include Arg-83, Glu-84, and Tyr-135. His-231 is subject to Phosphohistidine; by HPr. Residue Asp-245 participates in sn-glycerol 3-phosphate binding. Glycerol is bound by residues Asp-245 and Gln-246. Thr-267 and Gly-310 together coordinate ADP. Thr-267, Gly-310, Gln-314, and Gly-411 together coordinate ATP. 2 residues coordinate ADP: Gly-411 and Asn-415.

The protein belongs to the FGGY kinase family. As to quaternary structure, homotetramer and homodimer (in equilibrium). In terms of processing, the phosphoenolpyruvate-dependent sugar phosphotransferase system (PTS), including enzyme I, and histidine-containing protein (HPr) are required for the phosphorylation, which leads to the activation of the enzyme.

The enzyme catalyses glycerol + ATP = sn-glycerol 3-phosphate + ADP + H(+). It participates in polyol metabolism; glycerol degradation via glycerol kinase pathway; sn-glycerol 3-phosphate from glycerol: step 1/1. With respect to regulation, activated by phosphorylation and inhibited by fructose 1,6-bisphosphate (FBP). In terms of biological role, key enzyme in the regulation of glycerol uptake and metabolism. Catalyzes the phosphorylation of glycerol to yield sn-glycerol 3-phosphate. In Listeria welshimeri serovar 6b (strain ATCC 35897 / DSM 20650 / CCUG 15529 / CIP 8149 / NCTC 11857 / SLCC 5334 / V8), this protein is Glycerol kinase.